The chain runs to 434 residues: GPI-anchor transamidase component PIGU (434 aa).

Over 1-3 (MAA) the chain is Cytoplasmic. A helical membrane pass occupies residues 4 to 22 (PLALVLVVAVTVRAALFRS). Residues 23–78 (SLAEFISERVEVVSPLSSWKRVVEGLALLDLGVSPYSGAVFHETPLIIYLFHFLID) are Lumenal-facing. Residues 79-99 (YAELVFMITDALTAIALYFAI) form a helical membrane-spanning segment. Over 100 to 136 (QDFNKVVFKKQKLLLELDQYAPDVAELIRTPMEMRYI) the chain is Cytoplasmic. Helical transmembrane passes span 137–157 (PLKV…VAKS), 158–177 (TCAI…IKGS), 178–193 (VFLS…YQSL), and 194–204 (YPVTLFAPGLL). Residues 205–221 (YLLQRQYIPVKVKSKAF) are Cytoplasmic-facing. Lys215 contributes to the a cardiolipin binding site. A helical transmembrane segment spans residues 222–243 (WIFSWEYAMMYTGSLVVIVCLS). The Lumenal segment spans residues 244 to 285 (FFLLSSWDFIPAVYGFILSVPDLTPNIGLFWYFFAEMFEHFS). Residues 286–305 (LFFVCVFQINVFFYTVPLAI) form a helical membrane-spanning segment. Residues 306 to 310 (KLKEH) lie on the Cytoplasmic side of the membrane. Lys308 lines the a cardiolipin pocket. 2 helical membrane passes run 311-330 (PIFF…SYPT) and 331-344 (VGDV…FPVW). Residues 345–353 (NHLYRFLRN) lie on the Cytoplasmic side of the membrane. A helical transmembrane segment spans residues 354 to 371 (IFVLTCIIIVCSLLFPVL). At 372–383 (WHLWIYAGSANS) the chain is on the lumenal side. Residues Asn382 and Asn384 each contribute to the a 2-acyl-6-[6-phosphoethanolamine-alpha-D-mannosyl-(1-&gt;2)-6-phosphoethanolamine-alpha-D-mannosyl-(1-&gt;6)-2-phosphoethanolamine-alpha-D-mannosyl-(1-&gt;4)-alpha-D-glucosaminyl]-1-(1-radyl,2-acyl-sn-glycero-3-phospho)-1D-myo-inositol site. Residues 384–405 (NFFYAITLTFNVGQILLISDYF) form a helical membrane-spanning segment. Topologically, residues 406–434 (YAFLRREYYLTHGLYLTAKDGTEAMLVLK) are cytoplasmic.

Belongs to the PIGU family. In terms of assembly, heteropentamer. Part of the GPI-anchor transamidase complex, consisting of PIGK, PIGT, PIGS, PIGU and GAA1.

The protein localises to the endoplasmic reticulum membrane. It participates in glycolipid biosynthesis; glycosylphosphatidylinositol-anchor biosynthesis. Its function is as follows. Component of the glycosylphosphatidylinositol-anchor (GPI-anchor) transamidase (GPI-T) complex that catalyzes the formation of the linkage between a proprotein and a GPI-anchor and participates in GPI anchored protein biosynthesis. Binds the lipid portion of GPI-anchor. May act as an organizer in the transmembrane layer to recruit other subunits, and thus is essential for assembly of the complex. This Mus musculus (Mouse) protein is GPI-anchor transamidase component PIGU.